Consider the following 118-residue polypeptide: Large ribosomal subunit protein uL18 (118 aa).

This sequence belongs to the universal ribosomal protein uL18 family. Part of the 50S ribosomal subunit; part of the 5S rRNA/L5/L18/L25 subcomplex. Contacts the 5S and 23S rRNAs.

Its function is as follows. This is one of the proteins that bind and probably mediate the attachment of the 5S RNA into the large ribosomal subunit, where it forms part of the central protuberance. This chain is Large ribosomal subunit protein uL18, found in Levilactobacillus brevis (strain ATCC 367 / BCRC 12310 / CIP 105137 / JCM 1170 / LMG 11437 / NCIMB 947 / NCTC 947) (Lactobacillus brevis).